The following is a 380-amino-acid chain: Cytochrome b (380 aa).

4 helical membrane passes run 33-53 (FGSL…FLAM), 77-98 (WFIR…YIHV), 113-133 (WNVG…GYVL), and 178-198 (FFAF…VHLL). Residues His-83 and His-97 each contribute to the heme b site. Heme b is bound by residues His-182 and His-196. His-201 lines the a ubiquinone pocket. 4 consecutive transmembrane segments (helical) span residues 226 to 246 (TKDI…VLFA), 288 to 308 (LGGV…PYLY), 320 to 340 (LTQL…WIGA), and 347 to 367 (FITI…ILMP).

This sequence belongs to the cytochrome b family. As to quaternary structure, the cytochrome bc1 complex contains 11 subunits: 3 respiratory subunits (MT-CYB, CYC1 and UQCRFS1), 2 core proteins (UQCRC1 and UQCRC2) and 6 low-molecular weight proteins (UQCRH/QCR6, UQCRB/QCR7, UQCRQ/QCR8, UQCR10/QCR9, UQCR11/QCR10 and a cleavage product of UQCRFS1). This cytochrome bc1 complex then forms a dimer. Heme b is required as a cofactor.

The protein resides in the mitochondrion inner membrane. In terms of biological role, component of the ubiquinol-cytochrome c reductase complex (complex III or cytochrome b-c1 complex) that is part of the mitochondrial respiratory chain. The b-c1 complex mediates electron transfer from ubiquinol to cytochrome c. Contributes to the generation of a proton gradient across the mitochondrial membrane that is then used for ATP synthesis. In Cricetomys emini (Emin's giant pouched rat), this protein is Cytochrome b (MT-CYB).